The sequence spans 366 residues: Phospho-2-dehydro-3-deoxyheptonate aldolase (366 aa).

It belongs to the class-I DAHP synthase family.

It catalyses the reaction D-erythrose 4-phosphate + phosphoenolpyruvate + H2O = 7-phospho-2-dehydro-3-deoxy-D-arabino-heptonate + phosphate. Its pathway is metabolic intermediate biosynthesis; chorismate biosynthesis; chorismate from D-erythrose 4-phosphate and phosphoenolpyruvate: step 1/7. In terms of biological role, stereospecific condensation of phosphoenolpyruvate (PEP) and D-erythrose-4-phosphate (E4P) giving rise to 3-deoxy-D-arabino-heptulosonate-7-phosphate (DAHP). The protein is Phospho-2-dehydro-3-deoxyheptonate aldolase (aroG) of Corynebacterium glutamicum (strain ATCC 13032 / DSM 20300 / JCM 1318 / BCRC 11384 / CCUG 27702 / LMG 3730 / NBRC 12168 / NCIMB 10025 / NRRL B-2784 / 534).